The following is a 478-amino-acid chain: Glycogen synthase (478 aa).

ADP-alpha-D-glucose is bound at residue Lys-15.

The protein belongs to the glycosyltransferase 1 family. Bacterial/plant glycogen synthase subfamily.

It catalyses the reaction [(1-&gt;4)-alpha-D-glucosyl](n) + ADP-alpha-D-glucose = [(1-&gt;4)-alpha-D-glucosyl](n+1) + ADP + H(+). It functions in the pathway glycan biosynthesis; glycogen biosynthesis. Functionally, synthesizes alpha-1,4-glucan chains using ADP-glucose. The polypeptide is Glycogen synthase (Lactococcus lactis subsp. lactis (strain IL1403) (Streptococcus lactis)).